The sequence spans 240 residues: Tetrahydromethanopterin S-methyltransferase subunit A (240 aa).

At 1 to 218 (MVDKKEPASG…KFHSGVHAGK (218 aa)) the chain is on the cytoplasmic side. Histidine 85 is a binding site for 5-hydroxybenzimidazolylcob(I)amide. A helical transmembrane segment spans residues 219–239 (IEGAMIGLTVTISLLGLLLLG). Residue arginine 240 is a topological domain, extracellular.

Belongs to the MtrA family. As to quaternary structure, the complex is composed of 8 subunits; MtrA, MtrB, MtrC, MtrD, MtrE, MtrF, MtrG and MtrH. 5-hydroxybenzimidazolylcob(I)amide is required as a cofactor.

The protein localises to the cell membrane. The catalysed reaction is 5-methyl-5,6,7,8-tetrahydromethanopterin + coenzyme M + 2 Na(+)(in) = 5,6,7,8-tetrahydromethanopterin + methyl-coenzyme M + 2 Na(+)(out). It functions in the pathway one-carbon metabolism; methanogenesis from CO(2); methyl-coenzyme M from 5,10-methylene-5,6,7,8-tetrahydromethanopterin: step 2/2. Functionally, part of a complex that catalyzes the formation of methyl-coenzyme M and tetrahydromethanopterin from coenzyme M and methyl-tetrahydromethanopterin. This is an energy-conserving, sodium-ion translocating step. In Methanosarcina acetivorans (strain ATCC 35395 / DSM 2834 / JCM 12185 / C2A), this protein is Tetrahydromethanopterin S-methyltransferase subunit A.